Here is a 286-residue protein sequence, read N- to C-terminus: MSGSYSPQKDPQHPTQHQQFPPTPPYPSSSVWSGNLGENPVFIGIGSAAGASALTLLGVMGYRRYWKRIKNADYVTSELLRRRAWIKGIVTSVGDGDNLRLYHTPGPFFRYPFKIRSIPTTQKGLRNETISIRIAGVDAPENAHFGNPAQPHAKESLEWLRATILGKRMRCQLLAKDQYNRIVAVPYISRRLWWDRPLPLMMLKEGMAVVYKAGGAEYGPWGLDEMLKVEAEARDAKRGLWALRKFESPGDFKARMKLKSDVSEERPEKKSPSGWIALVKRLIRRT.

A disordered region spans residues 1 to 29 (MSGSYSPQKDPQHPTQHQQFPPTPPYPSS). The chain crosses the membrane as a helical span at residues 41–61 (VFIGIGSAAGASALTLLGVMG). The TNase-like domain maps to 84–243 (AWIKGIVTSV…RDAKRGLWAL (160 aa)). Arg-133 is an active-site residue. Ca(2+) is bound at residue Asp-138. Active-site residues include Glu-141 and Arg-181.

The protein belongs to the LCL3 family.

It localises to the mitochondrion. The protein localises to the membrane. The chain is Probable endonuclease LCL3 (LCL3) from Cryptococcus gattii serotype B (strain WM276 / ATCC MYA-4071) (Filobasidiella gattii).